The primary structure comprises 70 residues: DNA-directed RNA polymerase subunit omega (70 aa).

This sequence belongs to the RNA polymerase subunit omega family. The RNAP catalytic core consists of 2 alpha, 1 beta, 1 beta' and 1 omega subunit. When a sigma factor is associated with the core the holoenzyme is formed, which can initiate transcription.

The enzyme catalyses RNA(n) + a ribonucleoside 5'-triphosphate = RNA(n+1) + diphosphate. Its function is as follows. Promotes RNA polymerase assembly. Latches the N- and C-terminal regions of the beta' subunit thereby facilitating its interaction with the beta and alpha subunits. This is DNA-directed RNA polymerase subunit omega from Bacillus cereus (strain B4264).